Consider the following 478-residue polypeptide: Cytochrome c-552 (478 aa).

Residues 1-26 (MARTILRARRFFSLILPFFFISSVYA) form the signal peptide. His94 contacts heme c. Residues Cys122, Cys125, and Lys126 each coordinate heme. Residues Cys160, Cys163, His164, Cys209, Cys212, and His213 each coordinate heme c. Positions 215, 216, 261, and 263 each coordinate Ca(2+). Substrate is bound at residue Tyr216. A substrate-binding site is contributed by His264. Heme c-binding residues include His275, Cys282, Cys285, His286, His301, Cys314, Cys317, His318, and His393.

It belongs to the cytochrome c-552 family. The cofactor is Ca(2+). It depends on heme c as a cofactor.

It is found in the periplasm. It carries out the reaction 6 Fe(III)-[cytochrome c] + NH4(+) + 2 H2O = 6 Fe(II)-[cytochrome c] + nitrite + 8 H(+). Its pathway is nitrogen metabolism; nitrate reduction (assimilation). Catalyzes the reduction of nitrite to ammonia, consuming six electrons in the process. The sequence is that of Cytochrome c-552 from Citrobacter koseri (strain ATCC BAA-895 / CDC 4225-83 / SGSC4696).